We begin with the raw amino-acid sequence, 2032 residues long: Cytoskeleton-associated protein 5 (2032 aa).

TOG regions lie at residues 1–223 (MGDD…KLPT), 268–502 (YELL…LVHG), and 588–817 (SIEV…GQSP). An N6-acetyllysine modification is found at Lys48. HEAT repeat units lie at residues 159–197 (IISL…WNRD), 356–394 (GQYA…TTTL), and 434–472 (KSLL…VVGE). Residues 501–579 (HGKKSGLATE…GTKNKKGLET (79 aa)) form a disordered region. The stretch at 750-788 (ELNVKAFISNVKTALAATNPAVRTSAITLLGVMYLYVGP) is one HEAT 4 repeat. Residues 811–848 (KMQGQSPPAPTRGIAKHSTSATDEGEDGEEPGEGGNDV) are disordered. A Phosphoserine modification is found at Ser816. Positions 833-842 (DEGEDGEEPG) are enriched in acidic residues. TOG stretches follow at residues 853–1081 (PRIE…ANMP) and 1193–1428 (IEQL…KRPS). 3 HEAT repeats span residues 855–893 (IEIS…EAKF), 936–974 (RQHV…QTGM), and 1013–1051 (PTDL…HLGY). The span at 1078-1095 (ANMPSKPAAPAKAMSKPM) shows a compositional bias: low complexity. A disordered region spans residues 1078 to 1156 (ANMPSKPAAP…KTTLKEDDDK (79 aa)). HEAT repeat units follow at residues 1284 to 1322 (ENEA…VYPA), 1324 to 1357 (KMFP…SYGM), and 1361 to 1399 (QPTP…VHGD). A disordered region spans residues 1420–1459 (IKRSAKRPSAAPVKQAEEKPQRTQNINSNANMLRKGPAED). A compositionally biased stretch (polar residues) spans 1441–1450 (RTQNINSNAN). Ser1469 is subject to Phosphoserine. The segment at 1801-1822 (SMDQTGSKSDKETEKGASRIDE) is disordered. Positions 1808–1822 (KSDKETEKGASRIDE) are enriched in basic and acidic residues. Ser1861 carries the phosphoserine modification. Disordered regions lie at residues 1893-1926 (SKGR…GNTN) and 1948-2032 (LDNT…SSRK). Residues 1909–1921 (VTCVPTPTSTVSS) show a composition bias toward low complexity. An interaction with TACC3 region spans residues 1932 to 1957 (PSVYLERLKILRQRCGLDNTKQDDRP). Positions 1972-1983 (ASSTDMLHSKLS) are enriched in polar residues. Residues 1984 to 1997 (QLRESREQHQHSDL) are compositionally biased toward basic and acidic residues. Low complexity predominate over residues 2002–2015 (THSAGTMTSSSSTT). A compositionally biased stretch (basic and acidic residues) spans 2018 to 2032 (DDLKKRLERIKSSRK).

This sequence belongs to the TOG/XMAP215 family. As to quaternary structure, interacts with TACC1. Interacts with HNRNPA2B1. Interacts with TACC3 independently of clathrin. Interacts with TACC3 and clathrin forming the TACC3/ch-TOG/clathrin complex located at spindle inter-microtubules bridges. Interacts with NDC80; indicative for an association with the NDC80 complex. Interacts with SLAIN2. Interacts with SLAIN1.

The protein resides in the cytoplasm. Its subcellular location is the cytoskeleton. It localises to the microtubule organizing center. It is found in the centrosome. The protein localises to the spindle pole. The protein resides in the spindle. Its subcellular location is the chromosome. It localises to the centromere. It is found in the kinetochore. Binds to the plus end of microtubules and regulates microtubule dynamics and microtubule organization. Acts as a processive microtubule polymerase. Promotes cytoplasmic microtubule nucleation and elongation. Plays a major role in organizing spindle poles. In spindle formation protects kinetochore microtubules from depolymerization by KIF2C and has an essential role in centrosomal microtubule assembly independently of KIF2C activity. Contributes to centrosome integrity. Acts as a component of the TACC3/ch-TOG/clathrin complex proposed to contribute to stabilization of kinetochore fibers of the mitotic spindle by acting as inter-microtubule bridge. The TACC3/ch-TOG/clathrin complex is required for the maintenance of kinetochore fiber tension. Enhances the strength of NDC80 complex-mediated kinetochore-tip microtubule attachments. The protein is Cytoskeleton-associated protein 5 of Mus musculus (Mouse).